The chain runs to 418 residues: uncharacterized protein (418 aa).

Helical transmembrane passes span 51 to 71, 79 to 99, 110 to 130, 163 to 183, 224 to 244, 258 to 278, 289 to 309, 315 to 335, 356 to 376, and 379 to 399; these read FVMA…GALV, ALVV…PLFA, VTGI…LGAV, FFGP…SVLA, VIFG…LPLV, ALMS…AYVV, PIFL…TLSD, VGVQ…FPLV, ATGI…VVAG, and AAFM…LVAM.

This sequence belongs to the major facilitator superfamily.

The protein resides in the cell membrane. This is an uncharacterized protein from Mycobacterium tuberculosis (strain CDC 1551 / Oshkosh).